A 150-amino-acid chain; its full sequence is Ribonuclease HI (150 aa).

An RNase H type-1 domain is found at 1–141 (MKSINAYTDG…VDVLARGQAM (141 aa)). The Mg(2+) site is built by Asp9, Glu47, Asp69, and Asp133.

The protein belongs to the RNase H family. As to quaternary structure, monomer. The cofactor is Mg(2+).

It localises to the cytoplasm. The catalysed reaction is Endonucleolytic cleavage to 5'-phosphomonoester.. Endonuclease that specifically degrades the RNA of RNA-DNA hybrids. The polypeptide is Ribonuclease HI (Xylella fastidiosa (strain 9a5c)).